Consider the following 315-residue polypeptide: Protein-L-isoaspartate O-methyltransferase (315 aa).

Disordered regions lie at residues 1–47 (MSGE…KPAA) and 59–89 (RALP…AAPK). Residues 14-34 (EDLKRAPRKSEVRSGSGERHA) are compositionally biased toward basic and acidic residues. Low complexity-rich tracts occupy residues 35-47 (ASAV…KPAA) and 59-81 (RALP…LKPA). Ser-162 is an active-site residue.

This sequence belongs to the methyltransferase superfamily. L-isoaspartyl/D-aspartyl protein methyltransferase family.

It localises to the cytoplasm. It catalyses the reaction [protein]-L-isoaspartate + S-adenosyl-L-methionine = [protein]-L-isoaspartate alpha-methyl ester + S-adenosyl-L-homocysteine. Functionally, catalyzes the methyl esterification of L-isoaspartyl residues in peptides and proteins that result from spontaneous decomposition of normal L-aspartyl and L-asparaginyl residues. It plays a role in the repair and/or degradation of damaged proteins. This is Protein-L-isoaspartate O-methyltransferase from Burkholderia ambifaria (strain MC40-6).